Reading from the N-terminus, the 172-residue chain is Large ribosomal subunit protein uL5 (172 aa).

This sequence belongs to the universal ribosomal protein uL5 family. As to quaternary structure, part of the 50S ribosomal subunit; contacts the 5S rRNA and probably tRNA. Forms a bridge to the 30S subunit in the 70S ribosome.

This is one of the proteins that bind and probably mediate the attachment of the 5S RNA into the large ribosomal subunit, where it forms part of the central protuberance. In the 70S ribosome it contacts protein S13 of the 30S subunit (bridge B1b), connecting the 2 subunits; this bridge is implicated in subunit movement. May contact the P site tRNA; the 5S rRNA and some of its associated proteins might help stabilize positioning of ribosome-bound tRNAs. This chain is Large ribosomal subunit protein uL5, found in Haloferax mediterranei (strain ATCC 33500 / DSM 1411 / JCM 8866 / NBRC 14739 / NCIMB 2177 / R-4) (Halobacterium mediterranei).